The following is a 258-amino-acid chain: Aspartate/glutamate leucyltransferase (258 aa).

The protein belongs to the R-transferase family. Bpt subfamily.

The protein localises to the cytoplasm. It catalyses the reaction N-terminal L-glutamyl-[protein] + L-leucyl-tRNA(Leu) = N-terminal L-leucyl-L-glutamyl-[protein] + tRNA(Leu) + H(+). It carries out the reaction N-terminal L-aspartyl-[protein] + L-leucyl-tRNA(Leu) = N-terminal L-leucyl-L-aspartyl-[protein] + tRNA(Leu) + H(+). Functionally, functions in the N-end rule pathway of protein degradation where it conjugates Leu from its aminoacyl-tRNA to the N-termini of proteins containing an N-terminal aspartate or glutamate. The protein is Aspartate/glutamate leucyltransferase of Rhodopseudomonas palustris (strain TIE-1).